A 93-amino-acid polypeptide reads, in one-letter code: Small ribosomal subunit protein bS18 (93 aa).

The protein belongs to the bacterial ribosomal protein bS18 family. In terms of assembly, part of the 30S ribosomal subunit. Forms a tight heterodimer with protein bS6.

Its function is as follows. Binds as a heterodimer with protein bS6 to the central domain of the 16S rRNA, where it helps stabilize the platform of the 30S subunit. This chain is Small ribosomal subunit protein bS18, found in Paracidovorax citrulli (strain AAC00-1) (Acidovorax citrulli).